A 450-amino-acid chain; its full sequence is FAD-linked oxidoreductase ptmO (450 aa).

One can recognise an FAD-binding PCMH-type domain in the interval 32-203 (PPELPYAIVR…TRFFIRTRPA (172 aa)).

Belongs to the oxygen-dependent FAD-linked oxidoreductase family. FAD serves as cofactor.

It participates in secondary metabolite biosynthesis. In terms of biological role, FAD-linked oxidoreductase; part of the gene cluster that mediates the biosynthesis of the indole diterpenes penitrems. The geranylgeranyl diphosphate (GGPP) synthase ptmG catalyzes the first step in penitrem biosynthesis via conversion of farnesyl pyrophosphate and isopentyl pyrophosphate into geranylgeranyl pyrophosphate (GGPP). Condensation of indole-3-glycerol phosphate with GGPP by the prenyl transferase ptmC then forms 3-geranylgeranylindole (3-GGI). Epoxidation by the FAD-dependent monooxygenase ptmM leads to a epoxidized-GGI that is substrate of the terpene cyclase ptmB for cyclization to yield paspaline. Paspaline is subsequently converted to 13-desoxypaxilline by the cytochrome P450 monooxygenase ptmP, the latter being then converted to paxilline by the cytochrome P450 monooxygenase ptmQ. Paxilline is converted to beta-paxitriol via C-10 ketoreduction by the short-chain dehydrogenase ptmH which can be monoprenylated at the C-20 by the indole diterpene prenyltransferase ptmD. A two-step elimination (acetylation and elimination) process performed by the O-acetyltransferase ptmV and ptmI leads to the production of the prenylated form of penijanthine. The FAD-linked oxidoreductase ptmO then converts the prenylated form of penijanthine into PC-M5 which is in turn transformed into PC-M4 by the aromatic dimethylallyltransferase ptmE. Five sequential oxidative transformations performed by the cytochrome P450 monooxygenases ptmK, ptmU, ptmL, ptmN and ptmJ yield the various penitrem compounds. PtmK, ptmU and ptmM are involved in the formation of the key bicyclic ring of penitrem C via the formation of the intermediates secopenitrem D and penitrem D. PtmL catalyzes the epoxidation of penitrem D and C to yield penitrem B and F, respectively. PtmJ catalyzes the last benzylic hydroxylation to convert penitrem B to prenitrem E and penitrem F to penitrem A. The protein is FAD-linked oxidoreductase ptmO of Penicillium ochrochloron.